The primary structure comprises 104 residues: uncharacterized protein (104 aa).

To A.aeolicus AQ_377.

This is an uncharacterized protein from Archaeoglobus fulgidus (strain ATCC 49558 / DSM 4304 / JCM 9628 / NBRC 100126 / VC-16).